A 186-amino-acid polypeptide reads, in one-letter code: NADH-ubiquinone oxidoreductase 17.8 kDa subunit, mitochondrial (186 aa).

A mitochondrion-targeting transit peptide spans 1–26 (MSSFRLGVSRVARQVRAPCVRNTRRY). The interval 22–49 (NTRRYASDSHAPADHTHSAAGHGEHHHA) is disordered. The span at 26–49 (YASDSHAPADHTHSAAGHGEHHHA) shows a compositional bias: basic and acidic residues. A helical transmembrane segment spans residues 58-78 (LGTAFYVIFGAIPAFGALYYF).

As to quaternary structure, complex I is composed of about 40 different subunits.

The protein resides in the mitochondrion inner membrane. The catalysed reaction is a ubiquinone + NADH + 5 H(+)(in) = a ubiquinol + NAD(+) + 4 H(+)(out). Functionally, transfer of electrons from NADH to the respiratory chain. The immediate electron acceptor for the enzyme is believed to be ubiquinone. The protein is NADH-ubiquinone oxidoreductase 17.8 kDa subunit, mitochondrial (nuo17.8) of Neurospora crassa (strain ATCC 24698 / 74-OR23-1A / CBS 708.71 / DSM 1257 / FGSC 987).